A 478-amino-acid chain; its full sequence is uncharacterized protein (478 aa).

The first 19 residues, 1 to 19 (MKLFPLCLSALVMSTATCA), serve as a signal peptide directing secretion. Residues 20–214 (SSVEGAIEKV…VPVTLKLQRQ (195 aa)) are Lumenal-facing. A helical transmembrane segment spans residues 215 to 235 (IFLSFSIVYGLISLWWAIRCI). The Cytoplasmic portion of the chain corresponds to 236-240 (CSRTK). Residues 241-261 (LHLVQVCLFCWFSFFILNHPV) traverse the membrane as a helical segment. Over 262–289 (KQRIFSIDNPDEYLVPFVVSCFTYFLGD) the chain is Lumenal. A helical membrane pass occupies residues 290–310 (GIEYALYSLFITTTVLGFGTI). The Cytoplasmic portion of the chain corresponds to 311-317 (RRTSKKM). The chain crosses the membrane as a helical span at residues 318–338 (VLFFSLLTCGQAFLVNVAPMV). At 339–356 (YPLLYISGSDKACVLRMV) the chain is on the lumenal side. The chain crosses the membrane as a helical span at residues 357-377 (WVFNKFLYLPLITFLGAVLAF). Residues 378–391 (RFRLKKASQFDTRW) lie on the Cytoplasmic side of the membrane. A helical membrane pass occupies residues 392 to 412 (NLFALTLAIIILFAFNDLVIF). Over 413–427 (DKLQKLWKYDDTTLE) the chain is Lumenal. A helical transmembrane segment spans residues 428–448 (YLKIVNGGIKFVAFSILLGPY). Over 449–478 (SKLFAEPKSLQLDDFLGKHDGHKDPSLEKF) the chain is Cytoplasmic.

The protein resides in the endoplasmic reticulum membrane. It is found in the golgi apparatus membrane. This is an uncharacterized protein from Schizosaccharomyces pombe (strain 972 / ATCC 24843) (Fission yeast).